A 608-amino-acid polypeptide reads, in one-letter code: Chaperone protein HtpG (608 aa).

Residues 1–332 form an a; substrate-binding region; the sequence is MQFQTEVNQL…VEDLPLNVSR (332 aa). A b region spans residues 333–536; that stretch reads EILQENQILK…KNKPDFAMQQ (204 aa). The segment at 537 to 608 is c; sequence LLKQMGQEQN…LTKIINKAFS (72 aa).

Belongs to the heat shock protein 90 family. Homodimer.

The protein resides in the cytoplasm. In terms of biological role, molecular chaperone. Has ATPase activity. The chain is Chaperone protein HtpG from Campylobacter jejuni subsp. jejuni serotype O:6 (strain 81116 / NCTC 11828).